The following is a 57-amino-acid chain: Protein new-glue 4 (57 aa).

An N-terminal signal peptide occupies residues 1–16 (MEWKLLLIVLPWLLVC).

Its subcellular location is the secreted. The chain is Protein new-glue 4 (ng4) from Drosophila melanogaster (Fruit fly).